Reading from the N-terminus, the 1134-residue chain is TBC1 domain family member 8 (1134 aa).

2 consecutive GRAM domains span residues 145-212 (VKFE…ERTS) and 285-353 (EFFR…EKME). The segment at 433 to 466 (ASQSSEEREEKRPLPHPEPLTAVFQQSGSQSPDS) is disordered. Residues 437–447 (SEEREEKRPLP) are compositionally biased toward basic and acidic residues. A compositionally biased stretch (polar residues) spans 455 to 466 (VFQQSGSQSPDS). The Rab-GAP TBC domain maps to 504–691 (GIPESLRGRL…HVVDCFFYDG (188 aa)). A disordered region spans residues 1034-1070 (SSSGSCSQECEEPQASAPPEQDSVFAEAGKSPQAFPE).

In terms of biological role, may act as a GTPase-activating protein for Rab family protein(s). The polypeptide is TBC1 domain family member 8 (Tbc1d8) (Mus musculus (Mouse)).